The following is a 390-amino-acid chain: Probable splicing factor YJU2B (390 aa).

The disordered stretch occupies residues 354–390 (DACKASSSSEEENSIDSCATGKSLVADYSDSDSGSEV).

This sequence belongs to the CWC16 family.

It localises to the nucleus. May be involved in mRNA splicing. This Danio rerio (Zebrafish) protein is Probable splicing factor YJU2B (yju2b).